The sequence spans 377 residues: Chaperone protein DnaJ (377 aa).

One can recognise a J domain in the interval 5–70; it reads DFYEVLGVER…SKRAAYDQYG (66 aa). Residues 136–214 form a CR-type zinc finger; it reads GTTVTIRVPT…CHGQGRVEEQ (79 aa). Zn(2+) is bound by residues cysteine 149, cysteine 152, cysteine 166, cysteine 169, cysteine 188, cysteine 191, cysteine 202, and cysteine 205. CXXCXGXG motif repeat units lie at residues 149-156, 166-173, 188-195, and 202-209; these read CKTCNGSG, CTTCGGIG, CPRCHGTG, and CGSCHGQG.

The protein belongs to the DnaJ family. As to quaternary structure, homodimer. The cofactor is Zn(2+).

It is found in the cytoplasm. Its function is as follows. Participates actively in the response to hyperosmotic and heat shock by preventing the aggregation of stress-denatured proteins and by disaggregating proteins, also in an autonomous, DnaK-independent fashion. Unfolded proteins bind initially to DnaJ; upon interaction with the DnaJ-bound protein, DnaK hydrolyzes its bound ATP, resulting in the formation of a stable complex. GrpE releases ADP from DnaK; ATP binding to DnaK triggers the release of the substrate protein, thus completing the reaction cycle. Several rounds of ATP-dependent interactions between DnaJ, DnaK and GrpE are required for fully efficient folding. Also involved, together with DnaK and GrpE, in the DNA replication of plasmids through activation of initiation proteins. The sequence is that of Chaperone protein DnaJ from Pseudomonas paraeruginosa (strain DSM 24068 / PA7) (Pseudomonas aeruginosa (strain PA7)).